A 76-amino-acid polypeptide reads, in one-letter code: Omega-conotoxin-like TeAr94 (76 aa).

The first 22 residues, Met1–Ala22, serve as a signal peptide directing secretion. Positions Val23 to Asn50 are excised as a propeptide. 3 disulfides stabilise this stretch: Cys53–Cys67, Cys60–Cys71, and Cys66–Cys75.

Belongs to the conotoxin O1 superfamily. Expressed by the venom duct.

It localises to the secreted. Functionally, omega-conotoxins act at presynaptic membranes, they bind and block voltage-gated calcium channels. The chain is Omega-conotoxin-like TeAr94 from Conus textile (Cloth-of-gold cone).